The chain runs to 317 residues: Homoserine O-acetyltransferase (317 aa).

C142 functions as the Acyl-thioester intermediate in the catalytic mechanism. Residues K163 and S192 each contribute to the substrate site. The active-site Proton acceptor is H235. E237 is an active-site residue. R249 provides a ligand contact to substrate.

Belongs to the MetA family.

It localises to the cytoplasm. The enzyme catalyses L-homoserine + acetyl-CoA = O-acetyl-L-homoserine + CoA. It functions in the pathway amino-acid biosynthesis; L-methionine biosynthesis via de novo pathway; O-acetyl-L-homoserine from L-homoserine: step 1/1. Functionally, transfers an acetyl group from acetyl-CoA to L-homoserine, forming acetyl-L-homoserine. The chain is Homoserine O-acetyltransferase from Rhizorhabdus wittichii (strain DSM 6014 / CCUG 31198 / JCM 15750 / NBRC 105917 / EY 4224 / RW1) (Sphingomonas wittichii).